We begin with the raw amino-acid sequence, 67 residues long: Teratocyte protein CftICK-II (67 aa).

An N-terminal signal peptide occupies residues 1 to 25 (MVKSLLFAIGYLIFLLVTRVNVINA). 3 disulfides stabilise this stretch: cysteine 28-cysteine 42, cysteine 35-cysteine 46, and cysteine 41-cysteine 57.

As to expression, abundantly expressed by teratocytes, which are extra-embryonic cells released by parasitoid wasps into their hosts during larval eclosion.

The protein resides in the secreted. This endoparasitoid wasp peptide has immununosuppressive, antimicrobial and insecticidal activities. Suppress cellular immunity which is detectable as a reduction of hemocyte encapsulation in the host. Shows moderate antifungal activity against C.albicans (MIC=4 ug/ml). In vivo, ingestion of this peptide (probably at excessive doses) increases larval mortality and reduces leaf consumption of D.saccharalis, a permissive host for C.flavipes. The polypeptide is Teratocyte protein CftICK-II (Cotesia flavipes (Parasitic wasp)).